Here is a 389-residue protein sequence, read N- to C-terminus: Monomeric sarcosine oxidase (389 aa).

8 to 38 serves as a coordination point for FAD; that stretch reads DVIVVGAGSMGMAAGYYLSKQGVKTLLVDSF. C318 is subject to S-8alpha-FAD cysteine.

Belongs to the MSOX/MTOX family. MSOX subfamily. In terms of assembly, monomer. The cofactor is FAD.

The protein resides in the cytoplasm. The catalysed reaction is sarcosine + O2 + H2O = formaldehyde + glycine + H2O2. Its function is as follows. Catalyzes the oxidative demethylation of sarcosine. This is Monomeric sarcosine oxidase (soxA) from Arthrobacter sp. (strain TE1826).